A 224-amino-acid polypeptide reads, in one-letter code: SPI-2 type 3 secretion system stator protein (224 aa).

It belongs to the SctL stator family. In terms of assembly, the core secretion machinery of the T3SS is composed of approximately 20 different proteins, including cytoplasmic components, a base, an export apparatus and a needle. This subunit is part of the cytosolic complex. Interacts directly with SsaN/SctN2 (T3SS-2 ATPase).

The protein localises to the cytoplasm. Component of the type III secretion system (T3SS), also called injectisome, which is used to inject bacterial effector proteins into eukaryotic host cells. Acts as a regulator of the SsaN/SctN2 ATPase activity. This Salmonella typhimurium (strain LT2 / SGSC1412 / ATCC 700720) protein is SPI-2 type 3 secretion system stator protein.